Consider the following 551-residue polypeptide: Tetrachloroethene reductive dehalogenase (551 aa).

A signal peptide (tat-type signal) is located at residues 1–39 (MGEINRRNFLKASMLGAAAAAVASASAVKGMVSPLVADA). The 30-residue stretch at 411-440 (PRKFGVREFCRLCKKCADACPAQAISHEKD) folds into the 4Fe-4S ferredoxin-type 1 domain. [4Fe-4S] cluster is bound by residues C420, C423, C426, C430, C467, C478, C481, and C485. The 4Fe-4S ferredoxin-type 2 domain maps to 478–496 (CANCVAVCSWNKVETWNHD).

This sequence belongs to the PceA family. In terms of assembly, monomer. [4Fe-4S] cluster serves as cofactor. The cofactor is corrinoid. Predicted to be exported by the Tat system. The position of the signal peptide cleavage has been experimentally proven.

It localises to the cell membrane. The catalysed reaction is trichloroethene + chloride + A + H(+) = tetrachloroethene + AH2. The enzyme catalyses trichloroethene + AH2 = (Z)-1,2-dichloroethene + chloride + A + H(+). Its activity is regulated as follows. Activity is inhibited by ammonium ions. Photoreversibly inactivated by 1-iodopropane. In terms of biological role, catalyzes the reductive dechlorination of tetrachloroethene (PCE) to trichloroethene (TCE) and of trichloroethene to cis-1,2-dichloroethene (DCE). Can also use trichlorofluoroethene, tetrachloromethane, hexachloroethane, tetrachloroethane, trichloroethane and 1,1,1-trichloro-2,2,2-trifluoroethane. Menaquinone can act as the electron donor. Reduced methyl viologen can act as the artificial electron donor. The polypeptide is Tetrachloroethene reductive dehalogenase (Dehalobacter restrictus (strain DSM 9455 / PER-K23)).